The following is a 356-amino-acid chain: Carbohydrate sulfotransferase 10 (356 aa).

At 1–6 (MHHQWL) the chain is on the cytoplasmic side. Residues 7 to 27 (LLAACFWVIFMFMVASKFITL) form a helical; Signal-anchor for type II membrane protein membrane-spanning segment. Residues 28 to 356 (TFKDPDGYSA…GYQKPDFLLN (329 aa)) lie on the Lumenal side of the membrane. N-linked (GlcNAc...) asparagine glycosylation occurs at Asn99. 3'-phosphoadenylyl sulfate is bound by residues 127-133 (PKVGNTQ) and 189-197 (RDPFERLIS). N-linked (GlcNAc...) asparagine glycosylation is found at Asn228 and Asn316.

The protein belongs to the sulfotransferase 2 family. As to expression, in myogenic progenitors, it is ubiquitously expressed.

It localises to the golgi apparatus membrane. It catalyses the reaction 3-O-{beta-D-GlcA-(1-&gt;[3)-alpha-D-Xyl-(1-&gt;3)-beta-D-GlcA-(1-&gt;](n)-4)-beta-D-Xyl-(1-&gt;4)-Rib-ol-P-Rib-ol-P-3-beta-D-GalNAc-(1-&gt;3)-beta-D-GlcNAc-(1-&gt;4)-O-6-P-alpha-D-Man}-L-Thr-[protein] + 3'-phosphoadenylyl sulfate = 3-O-{O-3-S-beta-D-GlcA-(1-&gt;[3)-alpha-D-Xyl-(1-&gt;3)-beta-D-GlcA-(1-&gt;](n)-4)-beta-D-Xyl-(1-&gt;4)-Rib-ol-P-Rib-ol-P-3-beta-D-GalNAc-(1-&gt;3)-beta-D-GlcNAc-(1-&gt;4)-O-6-P-alpha-D-Man}-L-Thr-[protein] + adenosine 3',5'-bisphosphate + H(+). It carries out the reaction 17beta-estradiol 3-O-(beta-D-glucuronate) + 3'-phosphoadenylyl sulfate = 17beta-estradiol 3-O-(3-sulfo-beta-D-glucuronate) + adenosine 3',5'-bisphosphate + H(+). The enzyme catalyses 17beta-estradiol 3-O-(beta-D-glucuronate) 17-sulfate + 3'-phosphoadenylyl sulfate = 17beta-estradiol 3-O-(3-sulfo-beta-D-glucuronate) 17-sulfate + adenosine 3',5'-bisphosphate + H(+). The catalysed reaction is 17beta-estradiol 17-O-(beta-D-glucuronate) + 3'-phosphoadenylyl sulfate = 17beta-estradiol 17-O-(3-sulfo-beta-D-glucuronate) + adenosine 3',5'-bisphosphate + H(+). It catalyses the reaction 16alpha,17beta-estriol 3-O-(beta-D-glucuronate) + 3'-phosphoadenylyl sulfate = 16alpha,17beta-estriol 3-O-(3-sulfo-beta-D-glucuronate) + adenosine 3',5'-bisphosphate + H(+). It carries out the reaction 16alpha,17beta-estriol 16-O-(beta-D-glucuronate) + 3'-phosphoadenylyl sulfate = 16alpha,17beta-estriol 16-O-(3-sulfo-beta-D-glucuronate) + adenosine 3',5'-bisphosphate + H(+). The enzyme catalyses 16alpha,17beta-estriol 17-O-(beta-D-glucuronate) + 3'-phosphoadenylyl sulfate = 16alpha,17beta-estriol 17-O-(3-sulfo-beta-D-glucuronate) + adenosine 3',5'-bisphosphate + H(+). The catalysed reaction is estrone 3-O-(beta-D-glucuronate) + 3'-phosphoadenylyl sulfate = estrone 3-O-(3-sulfo-beta-D-glucuronate) + adenosine 3',5'-bisphosphate + H(+). It catalyses the reaction 3alpha,20alpha-dihydroxy-5beta-pregnane 3-O-(beta-D-glucuronate) + 3'-phosphoadenylyl sulfate = 3alpha,20alpha-dihydroxy-5beta-pregnane 3-O-(3-sulfo-beta-D-glucuronate) + adenosine 3',5'-bisphosphate + H(+). It carries out the reaction testosterone 17-O-(beta-D-glucuronate) + 3'-phosphoadenylyl sulfate = testosterone 17-O-(3-sulfo-beta-D-glucuronate) + adenosine 3',5'-bisphosphate + H(+). The enzyme catalyses 3beta-androst-5-en-17-one 3-O-(beta-D-glucuronate) + 3'-phosphoadenylyl sulfate = 3beta-androst-5-en-17-one 3-O-(3-sulfo-beta-D-glucuronate) + adenosine 3',5'-bisphosphate + H(+). The catalysed reaction is 3alpha,17alpha-dihydroxy-5beta-androstane-11-one-17beta-carboxylate 3-O-(beta-D-glucuronate) + 3'-phosphoadenylyl sulfate = 3alpha,17alpha-dihydroxy-5beta-androstane-11-one-17beta-carboxylate 3-O-(3-sulfo-beta-D-glucuronate) + adenosine 3',5'-bisphosphate + H(+). It catalyses the reaction 3alpha-hydroxyetiocholan-17-one 3-O-(beta-D-glucuronate) + 3'-phosphoadenylyl sulfate = 3alpha-hydroxyetiocholan-17-one 3-O-(3-sulfo-beta-D-glucuronate) + adenosine 3',5'-bisphosphate + H(+). It functions in the pathway steroid metabolism. It participates in protein modification; carbohydrate sulfation. In terms of biological role, catalyzes the transfer of sulfate from 3'-phosphoadenylyl sulfate (PAPS) to position 3 of terminal glucuronic acid of both protein- and lipid-linked oligosaccharides. Participates in biosynthesis of HNK-1 carbohydrate structure 3-O-sulfo-beta-D-GlcA-(1-&gt;3)-beta-D-Gal-(1-&gt;4)-D-GlcNAc-R, a sulfated glucuronyl-lactosaminyl residue carried by many neural recognition molecules, which is involved in cell interactions during ontogenetic development and in synaptic plasticity in the adult. May be indirectly involved in synapse plasticity of the hippocampus, via its role in HNK-1 biosynthesis. Sulfates terminal glucuronyl residue of the laminin globular (LG)-domain binding epitope on DAG1/alpha-dystroglycan and prevents further polymerization by LARGE1 glycosyltransferase. Likely defines the chain length of LG epitope, conferring binding specificity to extracellular matrix components. Plays a role in down-regulating the steroid hormones. Sulfates glucuronidated estrogens and androgens with an impact in hormone cycle and fertility. Has a preference for glucuronyl moiety at the 3-hydroxyl group of a sterol ring rather than the 17-hydroxyl group, showing high catalytic efficiency for 17beta-estradiol 3-O-(beta-D-glucuronate) and dehydroepiandrosterone 3-O-(beta-D-glucuronate) hormones. This chain is Carbohydrate sulfotransferase 10 (Chst10), found in Rattus norvegicus (Rat).